The chain runs to 188 residues: Peptidyl-tRNA hydrolase (188 aa).

Y18 provides a ligand contact to tRNA. The active-site Proton acceptor is the H23. Residues Y67, N69, and N115 each contribute to the tRNA site.

It belongs to the PTH family. Monomer.

The protein resides in the cytoplasm. The catalysed reaction is an N-acyl-L-alpha-aminoacyl-tRNA + H2O = an N-acyl-L-amino acid + a tRNA + H(+). Hydrolyzes ribosome-free peptidyl-tRNAs (with 1 or more amino acids incorporated), which drop off the ribosome during protein synthesis, or as a result of ribosome stalling. Functionally, catalyzes the release of premature peptidyl moieties from peptidyl-tRNA molecules trapped in stalled 50S ribosomal subunits, and thus maintains levels of free tRNAs and 50S ribosomes. The sequence is that of Peptidyl-tRNA hydrolase from Salinibacter ruber (strain DSM 13855 / M31).